The primary structure comprises 620 residues: UDP-glucose:protein N-beta-glucosyltransferase (620 aa).

Belongs to the glycosyltransferase 41 family. It depends on Does not require a metal cofactor. as a cofactor.

It localises to the cytoplasm. It carries out the reaction L-asparaginyl-[protein] + UDP-alpha-D-glucose = N(4)-(beta-D-glucosyl)-L-asparaginyl-[protein] + UDP + H(+). It functions in the pathway protein modification; protein glycosylation. Functionally, inverting glycosyltransferase that catalyzes the transfer of one glucose moiety from UDP-glucose to an asparagine residue in peptides and proteins containing the NX(S/T) motif, resulting in their modification with a beta-linked 1,N-glucose. Likely acts as a key component of a general protein glycosylation system. Also accepts UDP-galactose as a substrate donor, albeit with low efficiency. Cannot use UDP-GlcNAc or UDP-GalNAc as substrate donor. The sequence is that of UDP-glucose:protein N-beta-glucosyltransferase from Actinobacillus pleuropneumoniae serotype 7 (strain AP76).